Reading from the N-terminus, the 373-residue chain is Hydrogenase maturation factor HypD (373 aa).

Residues C41, C69, and C72 each contribute to the Fe cation site.

Belongs to the HypD family. Monomer. Interacts with HypC. Forms a complex with HypC, or HybG, and HypE. Requires [4Fe-4S] cluster as cofactor.

The protein operates within protein modification; [NiFe] hydrogenase maturation. Its function is as follows. Involved in the maturation of [NiFe] hydrogenases. Involved in the biosynthesis of the Fe(CN)(2)CO cofactor. HypD may act as a scaffold on which the Fe(CN)(2)CO cofactor is formed. In complex with HypC, accepts the cyanide ligand generated by HypF and HypE, and also coordinates the carbon monoxide ligand. Required for the formation of all three hydrogenase isoenzymes. The chain is Hydrogenase maturation factor HypD from Escherichia coli (strain K12).